A 248-amino-acid polypeptide reads, in one-letter code: Probable transcriptional regulatory protein RL3983 (248 aa).

The protein belongs to the TACO1 family.

The protein resides in the cytoplasm. The polypeptide is Probable transcriptional regulatory protein RL3983 (Rhizobium johnstonii (strain DSM 114642 / LMG 32736 / 3841) (Rhizobium leguminosarum bv. viciae)).